The chain runs to 643 residues: Phosphomethylpyrimidine synthase (643 aa).

Substrate-binding positions include asparagine 248, methionine 277, tyrosine 306, histidine 342, 362-364 (SRG), 403-406 (DGLR), and glutamate 442. Histidine 446 lines the Zn(2+) pocket. Tyrosine 469 contacts substrate. Zn(2+) is bound at residue histidine 510. [4Fe-4S] cluster contacts are provided by cysteine 590, cysteine 593, and cysteine 598.

Belongs to the ThiC family. As to quaternary structure, homodimer. [4Fe-4S] cluster serves as cofactor.

It catalyses the reaction 5-amino-1-(5-phospho-beta-D-ribosyl)imidazole + S-adenosyl-L-methionine = 4-amino-2-methyl-5-(phosphooxymethyl)pyrimidine + CO + 5'-deoxyadenosine + formate + L-methionine + 3 H(+). It functions in the pathway cofactor biosynthesis; thiamine diphosphate biosynthesis. In terms of biological role, catalyzes the synthesis of the hydroxymethylpyrimidine phosphate (HMP-P) moiety of thiamine from aminoimidazole ribotide (AIR) in a radical S-adenosyl-L-methionine (SAM)-dependent reaction. This chain is Phosphomethylpyrimidine synthase, found in Burkholderia lata (strain ATCC 17760 / DSM 23089 / LMG 22485 / NCIMB 9086 / R18194 / 383).